The following is an 896-amino-acid chain: DNA mismatch repair protein MutS (896 aa).

607 to 614 contacts ATP; it reads GPNMSGKS. The disordered stretch occupies residues 809-835; the sequence is ANSVAPNTAASMPVEAADESQPVESET.

This sequence belongs to the DNA mismatch repair MutS family.

Its function is as follows. This protein is involved in the repair of mismatches in DNA. It is possible that it carries out the mismatch recognition step. This protein has a weak ATPase activity. In Lactiplantibacillus plantarum (strain ATCC BAA-793 / NCIMB 8826 / WCFS1) (Lactobacillus plantarum), this protein is DNA mismatch repair protein MutS.